The following is a 279-amino-acid chain: Putative ABC transporter ATP-binding protein GSU3001 (279 aa).

Positions 1-237 constitute an ABC transporter domain; sequence MRFSVDLKAY…PAEMESVKLR (237 aa). Residue 36-43 participates in ATP binding; it reads GSNGSGKT.

This sequence belongs to the ABC transporter superfamily.

Its subcellular location is the cell inner membrane. Its function is as follows. Probably part of an ABC transporter complex. Responsible for energy coupling to the transport system. The polypeptide is Putative ABC transporter ATP-binding protein GSU3001 (Geobacter sulfurreducens (strain ATCC 51573 / DSM 12127 / PCA)).